The primary structure comprises 881 residues: DNA mismatch repair protein MutS (881 aa).

632–639 lines the ATP pocket; sequence GPNMGGKS.

Belongs to the DNA mismatch repair MutS family.

Functionally, this protein is involved in the repair of mismatches in DNA. It is possible that it carries out the mismatch recognition step. This protein has a weak ATPase activity. The polypeptide is DNA mismatch repair protein MutS (Acinetobacter baylyi (strain ATCC 33305 / BD413 / ADP1)).